A 338-amino-acid polypeptide reads, in one-letter code: Phosphate acyltransferase (338 aa).

This sequence belongs to the PlsX family. In terms of assembly, homodimer. Probably interacts with PlsY.

The protein localises to the cytoplasm. It carries out the reaction a fatty acyl-[ACP] + phosphate = an acyl phosphate + holo-[ACP]. The protein operates within lipid metabolism; phospholipid metabolism. In terms of biological role, catalyzes the reversible formation of acyl-phosphate (acyl-PO(4)) from acyl-[acyl-carrier-protein] (acyl-ACP). This enzyme utilizes acyl-ACP as fatty acyl donor, but not acyl-CoA. The sequence is that of Phosphate acyltransferase from Gloeobacter violaceus (strain ATCC 29082 / PCC 7421).